A 470-amino-acid chain; its full sequence is Solvent efflux pump outer membrane protein SrpC (470 aa).

The first 16 residues, 1-16, serve as a signal peptide directing secretion; that stretch reads MKFKSLPMFALLMLGG. The N-palmitoyl cysteine moiety is linked to residue Cys-17. The S-diacylglycerol cysteine moiety is linked to residue Cys-17. The disordered stretch occupies residues 104–123; it reads LDGQASGNRTRLPDDLSPTG.

The protein belongs to the outer membrane factor (OMF) (TC 1.B.17) family.

It is found in the cell outer membrane. Its function is as follows. The outer membrane component of an organic solvent efflux pump. Involved in export of a number of low log POW compounds including hexane (log POW 3.5), toluene (log POW 2.5) and dimethylphthalate (log POW 2.3). The solvent resistance phenotype has been postulated to depend on the operon expression level. The sequence is that of Solvent efflux pump outer membrane protein SrpC (srpC) from Pseudomonas putida (Arthrobacter siderocapsulatus).